Here is a 319-residue protein sequence, read N- to C-terminus: Beta-ketoacyl-[acyl-carrier-protein] synthase III (319 aa).

Residues C115 and H246 contribute to the active site. Residues 247-251 (QANLR) form an ACP-binding region. Residue N276 is part of the active site.

This sequence belongs to the thiolase-like superfamily. FabH family. Homodimer.

The protein resides in the cytoplasm. It catalyses the reaction malonyl-[ACP] + acetyl-CoA + H(+) = 3-oxobutanoyl-[ACP] + CO2 + CoA. It participates in lipid metabolism; fatty acid biosynthesis. Its function is as follows. Catalyzes the condensation reaction of fatty acid synthesis by the addition to an acyl acceptor of two carbons from malonyl-ACP. Catalyzes the first condensation reaction which initiates fatty acid synthesis and may therefore play a role in governing the total rate of fatty acid production. Possesses both acetoacetyl-ACP synthase and acetyl transacylase activities. Its substrate specificity determines the biosynthesis of branched-chain and/or straight-chain of fatty acids. This chain is Beta-ketoacyl-[acyl-carrier-protein] synthase III, found in Coxiella burnetii (strain RSA 331 / Henzerling II).